A 245-amino-acid polypeptide reads, in one-letter code: Small ribosomal subunit protein uS2 (245 aa).

It belongs to the universal ribosomal protein uS2 family.

The chain is Small ribosomal subunit protein uS2 from Pseudomonas fluorescens (strain Pf0-1).